We begin with the raw amino-acid sequence, 468 residues long: Tyrosine-protein phosphatase YopH (468 aa).

The segment at 127–194 (ARGHVSSHSH…TVSPYGPEAR (68 aa)) is disordered. The segment covering 130–141 (HVSSHSHSALHA) has biased composition (low complexity). In terms of domain architecture, Tyrosine-protein phosphatase spans 152–461 (SHLDPRTPPL…DVLIKLAEGQ (310 aa)). The Phosphocysteine intermediate role is filled by C403.

This sequence belongs to the protein-tyrosine phosphatase family. Non-receptor class subfamily.

It localises to the secreted. The enzyme catalyses O-phospho-L-tyrosyl-[protein] + H2O = L-tyrosyl-[protein] + phosphate. In terms of biological role, essential virulence determinant. This protein is a protein tyrosine phosphatase. The essential function of YopH in Yersinia pathogenesis is host-protein dephosphorylation. It contributes to the ability of the bacteria to resist phagocytosis by peritoneal macrophages. This is Tyrosine-protein phosphatase YopH (yopH) from Yersinia pseudotuberculosis serotype I (strain IP32953).